The following is a 323-amino-acid chain: Putative divalent cation/proton antiporter TMEM165 (323 aa).

The N-terminal stretch at 1-33 (MAAAARGSGRAPTRRLLVLLLLQLLWAPAGVRA) is a signal peptide. The Lumenal segment spans residues 34–89 (GPEEDLSHRNQEPPAPAQQLQPQPAAVQGLEPARAEKGLTPVAPVHTNKEDAAAQT). Over residues 35 to 44 (PEEDLSHRNQ) the composition is skewed to basic and acidic residues. The disordered stretch occupies residues 35–60 (PEEDLSHRNQEPPAPAQQLQPQPAAV). The span at 50-59 (AQQLQPQPAA) shows a compositional bias: low complexity. A helical transmembrane segment spans residues 90 to 110 (NLGFIHAFVAAISVIIVSELG). The Cytoplasmic segment spans residues 111-126 (DKTFFIAAIMAMRYNR). A helical transmembrane segment spans residues 127-147 (LTVLAGAMLALALMTCLSVLF). Residues 148–151 (GYAT) lie on the Lumenal side of the membrane. A helical membrane pass occupies residues 152 to 172 (TVIPRVYTYYVSTALFAIFGI). At 173–227 (RMLREGLKMSPDEGQEELEEVQAELKKKDEEFQRTKLLNGPDVETGTSTAIPQKK) the chain is on the cytoplasmic side. Residues 184-211 (DEGQEELEEVQAELKKKDEEFQRTKLLN) adopt a coiled-coil conformation. The chain crosses the membrane as a helical span at residues 228 to 248 (WLHFISPIFVQALTLTFLAEW). Topologically, residues 249–266 (GDRSQLTTIVLAAREDPY) are lumenal. Residues 267-287 (GVAVGGTVGHCLCTGLAVIGG) form a helical membrane-spanning segment. Residues 288 to 298 (RMIAQKISVRT) lie on the Cytoplasmic side of the membrane. Residues 299–319 (VTIIGGIVFLAFAFSALFISP) traverse the membrane as a helical segment. Residues 320-323 (ESGF) lie on the Lumenal side of the membrane.

It belongs to the GDT1 family. As to expression, expressed in mammary epithelial cells (at protein level).

The protein localises to the golgi apparatus membrane. It catalyses the reaction Ca(2+)(in) + n H(+)(out) = Ca(2+)(out) + n H(+)(in). The enzyme catalyses Mn(2+)(in) + n H(+)(out) = Mn(2+)(out) + n H(+)(in). Putative divalent cation:proton antiporter that exchanges calcium or manganese ions for protons across the Golgi membrane. Mediates the reversible transport of calcium or manganese to the Golgi lumen driven by the proton gradient and possibly the membrane potential generated by V-ATPase. Provides calcium or manganese cofactors to resident Golgi enzymes and contributes to the maintenance of an acidic luminal Golgi pH required for proper functioning of the secretory pathway. Promotes Ca(2+) storage within the Golgi lumen of the mammary epithelial cells to be then secreted into milk. The transport mechanism and stoichiometry remains to be elucidated. The sequence is that of Putative divalent cation/proton antiporter TMEM165 from Mus musculus (Mouse).